Reading from the N-terminus, the 61-residue chain is Photosystem II reaction center protein K (61 aa).

The propeptide occupies 1-24 (MLNIFSLICICLNSALHSSSFFFA). Residues 32 to 52 (FFNPIVDFMPVIPVLFFLLAL) form a helical membrane-spanning segment.

This sequence belongs to the PsbK family. As to quaternary structure, PSII is composed of 1 copy each of membrane proteins PsbA, PsbB, PsbC, PsbD, PsbE, PsbF, PsbH, PsbI, PsbJ, PsbK, PsbL, PsbM, PsbT, PsbX, PsbY, PsbZ, Psb30/Ycf12, at least 3 peripheral proteins of the oxygen-evolving complex and a large number of cofactors. It forms dimeric complexes.

The protein resides in the plastid. The protein localises to the chloroplast thylakoid membrane. In terms of biological role, one of the components of the core complex of photosystem II (PSII). PSII is a light-driven water:plastoquinone oxidoreductase that uses light energy to abstract electrons from H(2)O, generating O(2) and a proton gradient subsequently used for ATP formation. It consists of a core antenna complex that captures photons, and an electron transfer chain that converts photonic excitation into a charge separation. This is Photosystem II reaction center protein K from Drimys granadensis.